The primary structure comprises 567 residues: Potassium-transporting ATPase potassium-binding subunit (567 aa).

Transmembrane regions (helical) follow at residues 3–23, 64–84, 136–156, 179–199, 254–274, 285–305, 330–350, 357–376, 421–441, 473–495, and 527–547; these read FIGW…VKPL, LTFT…IYAV, ALTH…MALI, LYVL…QGMP, LSNF…TNVF, WAIL…AYWA, FGIV…CGAV, FTAL…EIIV, MLAI…AVVL, AFGG…MFVG, and GGLF…LTFF.

This sequence belongs to the KdpA family. The system is composed of three essential subunits: KdpA, KdpB and KdpC.

It is found in the cell inner membrane. Functionally, part of the high-affinity ATP-driven potassium transport (or Kdp) system, which catalyzes the hydrolysis of ATP coupled with the electrogenic transport of potassium into the cytoplasm. This subunit binds the periplasmic potassium ions and delivers the ions to the membrane domain of KdpB through an intramembrane tunnel. This chain is Potassium-transporting ATPase potassium-binding subunit, found in Rhodopseudomonas palustris (strain ATCC BAA-98 / CGA009).